The primary structure comprises 264 residues: 4-hydroxy-tetrahydrodipicolinate reductase (264 aa).

9-14 provides a ligand contact to NAD(+); the sequence is GCSGRM. R36 is a binding site for NADP(+). Residues 100 to 102 and 121 to 124 contribute to the NAD(+) site; these read GTT and SANM. Residue H154 is the Proton donor/acceptor of the active site. Residue H155 coordinates (S)-2,3,4,5-tetrahydrodipicolinate. K158 functions as the Proton donor in the catalytic mechanism. Position 164-165 (164-165) interacts with (S)-2,3,4,5-tetrahydrodipicolinate; the sequence is GT.

This sequence belongs to the DapB family.

It localises to the cytoplasm. It catalyses the reaction (S)-2,3,4,5-tetrahydrodipicolinate + NAD(+) + H2O = (2S,4S)-4-hydroxy-2,3,4,5-tetrahydrodipicolinate + NADH + H(+). The catalysed reaction is (S)-2,3,4,5-tetrahydrodipicolinate + NADP(+) + H2O = (2S,4S)-4-hydroxy-2,3,4,5-tetrahydrodipicolinate + NADPH + H(+). It functions in the pathway amino-acid biosynthesis; L-lysine biosynthesis via DAP pathway; (S)-tetrahydrodipicolinate from L-aspartate: step 4/4. Catalyzes the conversion of 4-hydroxy-tetrahydrodipicolinate (HTPA) to tetrahydrodipicolinate. In Wolbachia sp. subsp. Brugia malayi (strain TRS), this protein is 4-hydroxy-tetrahydrodipicolinate reductase.